The sequence spans 599 residues: BICD family-like cargo adapter 1 (599 aa).

The interval 1 to 27 (MELPISFLSDSSRPAASSERGDQAALG) is disordered. A CC1 box motif is present at residues 76-80 (AARLG). Residues 80-341 (GKALLERNQD…WEAHCQVRSL (262 aa)) are a coiled coil. The tract at residues 352–375 (DSAVSTDSSMDESSETSSAKDVPA) is disordered. Residues 405–536 (EDDGLEEQIK…LEAWQDDMHR (132 aa)) adopt a coiled-coil conformation.

Belongs to the BICDR family. As to quaternary structure, part of a tripartite complex with dynein and dynactin, acts an adapter linking the dynein motor complex and dynactin. Interacts with KIF1C. Interacts with RAB6A and RAB6B; interaction is specific to Rab6.

The protein localises to the cytoplasm. It localises to the cytoskeleton. It is found in the microtubule organizing center. The protein resides in the centrosome. Functionally, acts as an adapter protein linking the dynein motor complex to various cargos and converts dynein from a non-processive to a highly processive motor in the presence of dynactin. Facilitates the interaction between dynein and dynactin and activates dynein processivity (the ability to move along a microtubule for a long distance without falling off the track). Predominantly recruits 2 dyneins, which increases both the force and speed of the microtubule motor. Component of secretory vesicle machinery in developing neurons that acts as a regulator of neurite outgrowth. Regulates the secretory vesicle transport by controlling the accumulation of Rab6-containing secretory vesicles in the pericentrosomal region restricting anterograde secretory transport during the early phase of neuronal differentiation, thereby inhibiting neuritogenesis. The polypeptide is BICD family-like cargo adapter 1 (bicdl1) (Xenopus tropicalis (Western clawed frog)).